We begin with the raw amino-acid sequence, 184 residues long: Adenine phosphoribosyltransferase (184 aa).

Belongs to the purine/pyrimidine phosphoribosyltransferase family. Homodimer.

It localises to the cytoplasm. The enzyme catalyses AMP + diphosphate = 5-phospho-alpha-D-ribose 1-diphosphate + adenine. It functions in the pathway purine metabolism; AMP biosynthesis via salvage pathway; AMP from adenine: step 1/1. Its function is as follows. Catalyzes a salvage reaction resulting in the formation of AMP, that is energically less costly than de novo synthesis. This Sphingopyxis alaskensis (strain DSM 13593 / LMG 18877 / RB2256) (Sphingomonas alaskensis) protein is Adenine phosphoribosyltransferase.